The sequence spans 612 residues: Peroxisomal carnitine O-octanoyltransferase (612 aa).

At M1 the chain carries N-acetylmethionine. Residues K40 and K57 each carry the N6-succinyllysine modification. H327 serves as the catalytic Proton acceptor. CoA is bound by residues K406 and 410–417 (KNKMLHPD). K406 bears the N6-acetyllysine; alternate mark. At K406 the chain carries N6-succinyllysine; alternate. Residues Y439, T441, and T452 each coordinate (R)-carnitine. Positions 610-612 (THL) match the Microbody targeting signal motif.

It belongs to the carnitine/choline acetyltransferase family. In terms of assembly, monomer.

The protein localises to the peroxisome. The catalysed reaction is octanoyl-CoA + (R)-carnitine = O-octanoyl-(R)-carnitine + CoA. The enzyme catalyses 4,8-dimethylnonanoyl-CoA + (R)-carnitine = O-4,8-dimethylnonanoyl-(R)-carnitine + CoA. It functions in the pathway lipid metabolism; fatty acid beta-oxidation. Functionally, beta-oxidation of fatty acids. The highest activity concerns the C6 to C10 chain length substrate. Converts the end product of pristanic acid beta oxidation, 4,8-dimethylnonanoyl-CoA, to its corresponding carnitine ester. In Homo sapiens (Human), this protein is Peroxisomal carnitine O-octanoyltransferase (CROT).